We begin with the raw amino-acid sequence, 137 residues long: Small heat shock protein IbpA (137 aa).

The sHSP domain maps to 28-137; the sequence is TQSNGGYPPY…AMKPRRIEIK (110 aa).

The protein belongs to the small heat shock protein (HSP20) family. Monomer. Forms homomultimers of about 100-150 subunits at optimal growth temperatures. Conformation changes to monomers at high temperatures or high ionic concentrations.

The protein localises to the cytoplasm. Associates with aggregated proteins, together with IbpB, to stabilize and protect them from irreversible denaturation and extensive proteolysis during heat shock and oxidative stress. Aggregated proteins bound to the IbpAB complex are more efficiently refolded and reactivated by the ATP-dependent chaperone systems ClpB and DnaK/DnaJ/GrpE. Its activity is ATP-independent. The protein is Small heat shock protein IbpA of Pectobacterium atrosepticum (strain SCRI 1043 / ATCC BAA-672) (Erwinia carotovora subsp. atroseptica).